The primary structure comprises 139 residues: D-ribose pyranase (139 aa).

Histidine 20 acts as the Proton donor in catalysis. Residues aspartate 28, histidine 106, and tyrosine 128 to asparagine 130 contribute to the substrate site.

This sequence belongs to the RbsD / FucU family. RbsD subfamily. As to quaternary structure, homodecamer.

It localises to the cytoplasm. The enzyme catalyses beta-D-ribopyranose = beta-D-ribofuranose. It participates in carbohydrate metabolism; D-ribose degradation; D-ribose 5-phosphate from beta-D-ribopyranose: step 1/2. Functionally, catalyzes the interconversion of beta-pyran and beta-furan forms of D-ribose. This is D-ribose pyranase from Actinobacillus succinogenes (strain ATCC 55618 / DSM 22257 / CCUG 43843 / 130Z).